The chain runs to 367 residues: MYVFKALAGIVLALVATLAHAERIRDLTSVQGVRENSLIGYGLVVGLDGTGDQTTQTPFTTQTLNNMLSQLGITVPTGTNMQLKNVAAVMVTASYPPFARQGQTIDVVVSSMGNAKSLRGGTLLMTPLKGVDSQVYALAQGNILVGGAGASAGGSSVQVNQLNGGRITNGAIIERELPTQFGAGNTINLQLNDEDFTMAQQITDAINRARGYGSATALDARTVQVRVPSGNSSQVRFLADIQNMEVNVTPQDAKVVINSRTGSVVMNREVTLDSCAVAQGNLSVTVNRQLNVNQPNTPFGGGQTVVTPQTQIDLRQSGGSLQSVRSSANLNSVVRALNALGATPMDLMSILQSMQSAGCLRAKLEII.

The N-terminal stretch at 1–21 (MYVFKALAGIVLALVATLAHA) is a signal peptide.

The protein belongs to the FlgI family. The basal body constitutes a major portion of the flagellar organelle and consists of four rings (L,P,S, and M) mounted on a central rod.

The protein resides in the periplasm. The protein localises to the bacterial flagellum basal body. Assembles around the rod to form the L-ring and probably protects the motor/basal body from shearing forces during rotation. The protein is Flagellar P-ring protein of Salmonella paratyphi C (strain RKS4594).